Here is a 760-residue protein sequence, read N- to C-terminus: Mitochondrial intermediate peptidase (760 aa).

Residues 1-19 (MLARSVRTLVVSPKTVFRF) constitute a mitochondrion transit peptide. His543 is a Zn(2+) binding site. Glu544 is an active-site residue. His547 contacts Zn(2+).

The protein belongs to the peptidase M3 family. Zn(2+) serves as cofactor.

Its subcellular location is the mitochondrion matrix. The catalysed reaction is Release of an N-terminal octapeptide as second stage of processing of some proteins imported into the mitochondrion.. Functionally, cleaves proteins, imported into the mitochondrion, to their mature size. While most mitochondrial precursor proteins are processed to the mature form in one step by mitochondrial processing peptidase (MPP), the sequential cleavage by MIP of an octapeptide after initial processing by MPP is a required step for a subgroup of nuclear-encoded precursor proteins destined for the matrix or the inner membrane. The polypeptide is Mitochondrial intermediate peptidase (OCT1) (Leucoagaricus gongylophorus (Leaf-cutting ant fungus)).